The following is a 374-amino-acid chain: UPF0754 membrane protein SAB1779c (374 aa).

A run of 2 helical transmembrane segments spans residues 4–24 (LFII…TNVI) and 354–374 (SLGF…AIFV).

This sequence belongs to the UPF0754 family.

Its subcellular location is the cell membrane. The polypeptide is UPF0754 membrane protein SAB1779c (Staphylococcus aureus (strain bovine RF122 / ET3-1)).